Reading from the N-terminus, the 296-residue chain is Glycine N-acyltransferase (296 aa).

N6-acetyllysine; alternate occurs at positions 16, 127, and 141. N6-succinyllysine; alternate occurs at positions 16, 127, and 141. An N6-acetyllysine modification is found at Lys159. Lys169 is modified (N6-succinyllysine). 2 positions are modified to N6-acetyllysine; alternate: Lys183 and Lys256. Residues Lys183 and Lys256 each carry the N6-succinyllysine; alternate modification.

The protein belongs to the glycine N-acyltransferase family.

Its subcellular location is the mitochondrion. It carries out the reaction an acyl-CoA + glycine = an N-acylglycine + CoA + H(+). The enzyme catalyses benzoyl-CoA + glycine = N-benzoylglycine + CoA + H(+). Mitochondrial acyltransferase which transfers an acyl group to the N-terminus of glycine and glutamine, although much less efficiently. Can conjugate a multitude of substrates to form a variety of N-acylglycines, thereby detoxify xenobiotics, such as benzoic acid or salicylic acid, and endogenous organic acids, such as isovaleric acid. The protein is Glycine N-acyltransferase (GLYAT) of Pongo abelii (Sumatran orangutan).